A 305-amino-acid polypeptide reads, in one-letter code: Tyrosine recombinase XerC (305 aa).

Residues 4–95 (TSIQALINKW…AVKNFYRFLE (92 aa)) form the Core-binding (CB) domain. The 183-residue stretch at 116–298 (LLPKALSEDD…SIKHLEAVYT (183 aa)) folds into the Tyr recombinase domain. Catalysis depends on residues Arg-159, Lys-182, His-250, Arg-253, and His-276. The active-site O-(3'-phospho-DNA)-tyrosine intermediate is Tyr-285.

Belongs to the 'phage' integrase family. XerC subfamily. In terms of assembly, forms a cyclic heterotetrameric complex composed of two molecules of XerC and two molecules of XerD.

Its subcellular location is the cytoplasm. In terms of biological role, site-specific tyrosine recombinase, which acts by catalyzing the cutting and rejoining of the recombining DNA molecules. The XerC-XerD complex is essential to convert dimers of the bacterial chromosome into monomers to permit their segregation at cell division. It also contributes to the segregational stability of plasmids. The protein is Tyrosine recombinase XerC of Rickettsia africae (strain ESF-5).